Reading from the N-terminus, the 193-residue chain is MIDYILLIISTALINNFVLVKFLGLCPFMGVSKKIETAIGMGLATMFVLTVASLCAYLVEHYLLTPLHANFLRTLIFILVIAVVVQFTEMVIHKTSPTLYRLLGIFLPLITTNCAVLGVALLNINLAHNLTQSVIYGFSASLGFSLVLVLFAALRERLTAADIPLPFRGASIALITAGLMSLAFMGFSGLVRV.

Transmembrane regions (helical) follow at residues 5-25 (ILLIISTALINNFVLVKFLGL), 39-59 (IGMGLATMFVLTVASLCAYLV), 72-92 (LRTLIFILVIAVVVQFTEMVI), 102-122 (LLGIFLPLITTNCAVLGVALL), 134-154 (VIYGFSASLGFSLVLVLFAAL), and 171-191 (SIALITAGLMSLAFMGFSGLV).

Belongs to the NqrDE/RnfAE family. The complex is composed of six subunits: RnfA, RnfB, RnfC, RnfD, RnfE and RnfG.

The protein localises to the cell inner membrane. Its function is as follows. Part of a membrane-bound complex that couples electron transfer with translocation of ions across the membrane. The polypeptide is Ion-translocating oxidoreductase complex subunit A (Histophilus somni (strain 129Pt) (Haemophilus somnus)).